Consider the following 168-residue polypeptide: Mesencephalic astrocyte-derived neurotrophic factor homolog (168 aa).

Positions 1–17 (MSRLVLLISLVIVVASA) are cleaved as a signal peptide. Disulfide bonds link Cys22–Cys109, Cys25–Cys97, Cys55–Cys66, and Cys143–Cys146.

The protein belongs to the ARMET family. As to expression, expressed in the intestine, spermatheca and nervous system. Expressed in the hypoderm. Expressed in structures of the excretory system. Not expressed in the male gonad.

It localises to the secreted. The protein localises to the endoplasmic reticulum lumen. Its function is as follows. Inhibits endoplasmic reticulum (ER) stress response. Retained in the ER under normal conditions and is up-regulated and secreted by the ER in response to ER stress and hypoxia. Following secretion by the ER, directly binds to 3-O-sulfogalactosylceramide, a lipid sulfatide in the outer cell membrane of target cells. Sulfatide binding promotes its cellular uptake by endocytosis, and is required for its role in alleviating ER stress under ER stress conditions. Has a neuroprotective role, ensuring survival of dopaminergic neurons during normal growth. The protein is Mesencephalic astrocyte-derived neurotrophic factor homolog of Caenorhabditis elegans.